The primary structure comprises 154 residues: Pro-corazonin (154 aa).

The signal sequence occupies residues 1-19 (MLRLLLLPLFLFTLSMCMG). At Gln-20 the chain carries Pyrrolidone carboxylic acid. Asn-30 carries the asparagine amide modification. A propeptide spanning residues 70 to 154 (LERCLSQLQR…SAEPNVFGKH (85 aa)) is cleaved from the precursor.

The protein belongs to the corazonin family. Expression is restricted to 24 neurons in the larval CNS (8 in the brain and 16 in the ventral nerve cord) and 12-16 neurons in the pars lateralis of the adult brain.

It localises to the secreted. Cardioactive peptide. Corazonin is probably involved in the physiological regulation of the heart beat. Clock (Clk) and cycle (cyc) proteins negatively regulate Crz transcription in a cell-specific manner. This chain is Pro-corazonin (Crz), found in Drosophila simulans (Fruit fly).